A 169-amino-acid chain; its full sequence is MAPKKAKRRAAGGEGSSNVFSMFEQSQIQEYKEAFTIIDQNRDGIISKDDLRDVLASMGQLNVKNEELEAMIKEASGPINFTVFLTMFGEKLKGADPEDVIVSAFKVLDPEGTGSIKKEFLEELLTTQCDRFTAEEMKNLWAAFPPDVAGNVDYKNICYVITHGEEKEE.

Ser-21 is subject to Phosphoserine. 3 consecutive EF-hand domains span residues 26 to 61 (SQIQEYKEAFTIIDQNRDGIISKDDLRDVLASMGQL), 96 to 131 (DPEDVIVSAFKVLDPEGTGSIKKEFLEELLTTQCDR), and 132 to 167 (FTAEEMKNLWAAFPPDVAGNVDYKNICYVITHGEEK). Ca(2+) is bound by residues Asp-39, Asn-41, Asp-43, and Asp-50.

Myosin is a hexamer of 2 heavy chains and 4 light chains. Interacts with nanos3; the interaction negatively regulates mylpfa phosphorylation.

Its function is as follows. Myosin regulatory subunit that plays a role to maintain muscle integrity during early development. Plays a role in muscle contraction. The polypeptide is Myosin regulatory light chain 2, skeletal muscle isoform A (mylpfa) (Danio rerio (Zebrafish)).